We begin with the raw amino-acid sequence, 771 residues long: Hyperosmolality-gated Ca2+ permeable channel 1.2 (771 aa).

The Extracellular portion of the chain corresponds to 1–4 (MATL). Residues 5–27 (QDIGVSAGINILSAFVFFIIFAV) traverse the membrane as a helical segment. Over 28-100 (LRLQPFNDRV…AGLDSVVYLR (73 aa)) the chain is Cytoplasmic. The chain crosses the membrane as a helical span at residues 101–125 (IYWLGLKIFTPIAVLAWAVLVPVNW). At 126 to 156 (TNNTLEMAKQLRNVTSSDIDKLSVSNIPEYS) the chain is on the extracellular side. A helical transmembrane segment spans residues 157-178 (MRFWTHIVMAYAFTIWTCYVLM). The Cytoplasmic portion of the chain corresponds to 179–374 (KEYETIANMR…AIPYVSLTVR (196 aa)). The helical transmembrane segment at 375–401 (RLIMHVAFFFLTFFFIVPIAFVQSLAT) threads the bilayer. Over 402-419 (IEGIVKAAPFLKFIVDDK) the chain is Extracellular. The helical transmembrane segment at 420-445 (FMKSVIQGFLPGIALKLFLAFLPSIL) threads the bilayer. Over 446–462 (MIMSKFEGFTSISSLER) the chain is Cytoplasmic. Residues 463-485 (RAAFRYYIFNLVNVFLASVIAGA) form a helical membrane-spanning segment. The Extracellular segment spans residues 486–504 (AFEQLNSFLNQSANQIPKT). A helical membrane pass occupies residues 505–533 (IGVAIPMKATFFITYIMVDGWAGVAGEIL). The Cytoplasmic segment spans residues 534-566 (MLKPLIMFHLKNAFLVKTDKDREEAMDPGSIGF). A helical membrane pass occupies residues 567–588 (NTGEPRIQLYFLLGLVYAPVTP). Position 589 (Met-589) is a topological domain, extracellular. A helical transmembrane segment spans residues 590-605 (LLPFILVFFALAYIVY). The Cytoplasmic portion of the chain corresponds to 606 to 625 (RHQIINVYNQEYESAAAFWP). A helical transmembrane segment spans residues 626–648 (DVHGRVIAALVISQLLLMGLLGT). Residues 649 to 651 (KHA) are Extracellular-facing. A helical transmembrane segment spans residues 652 to 670 (ALAAPFLIALPVLTIGFHH). Over 671 to 771 (FCKGRYEPAF…PSLPFSGKLV (101 aa)) the chain is Cytoplasmic. Residues 741-771 (PTKRQSRRNTPAPSIISGDDSPSLPFSGKLV) form a disordered region.

The protein belongs to the CSC1 (TC 1.A.17) family. In terms of assembly, homodimer.

It localises to the membrane. With respect to regulation, activated by hyperosmotic shock after mannitol or NaCl treatment. Activated by mechanical pressure: activated in response to membrane stretch and poke. Membrane lipids play a key role in mechanosensation by acting as a wall mainly formed by lipid head groups. Functionally, acts as an osmosensitive calcium-permeable cation channel. Specifically conducts cations including Ca(2+), K(+) and Na(+) in vitro. Inactivation or closure of the channel is calcium-dependent. Mechanosensitive ion channel that converts mechanical stimuli into a flow of ions: activated in response to membrane stretch and poke. The sequence is that of Hyperosmolality-gated Ca2+ permeable channel 1.2 from Arabidopsis thaliana (Mouse-ear cress).